A 237-amino-acid chain; its full sequence is Ribonuclease PH (237 aa).

Residues Arg86 and 124-126 each bind phosphate; that span reads GTR.

Belongs to the RNase PH family. Homohexameric ring arranged as a trimer of dimers.

It carries out the reaction tRNA(n+1) + phosphate = tRNA(n) + a ribonucleoside 5'-diphosphate. Functionally, phosphorolytic 3'-5' exoribonuclease that plays an important role in tRNA 3'-end maturation. Removes nucleotide residues following the 3'-CCA terminus of tRNAs; can also add nucleotides to the ends of RNA molecules by using nucleoside diphosphates as substrates, but this may not be physiologically important. Probably plays a role in initiation of 16S rRNA degradation (leading to ribosome degradation) during starvation. This is Ribonuclease PH from Methylorubrum extorquens (strain PA1) (Methylobacterium extorquens).